Here is a 347-residue protein sequence, read N- to C-terminus: GMP reductase (347 aa).

108–131 (ADFIKLSEILAMSEELNFICIDIA) contributes to the NADP(+) binding site. Residues G181 and G183 each coordinate K(+). C186 acts as the Thioimidate intermediate in catalysis. 216–239 (IIGDGGCSCAGDVAKAFGGGADFV) is a binding site for NADP(+).

It belongs to the IMPDH/GMPR family. GuaC type 1 subfamily. Homotetramer.

The enzyme catalyses IMP + NH4(+) + NADP(+) = GMP + NADPH + 2 H(+). Functionally, catalyzes the irreversible NADPH-dependent deamination of GMP to IMP. It functions in the conversion of nucleobase, nucleoside and nucleotide derivatives of G to A nucleotides, and in maintaining the intracellular balance of A and G nucleotides. This Shewanella halifaxensis (strain HAW-EB4) protein is GMP reductase.